A 359-amino-acid polypeptide reads, in one-letter code: Aspartate carbamoyltransferase catalytic subunit (359 aa).

Carbamoyl phosphate contacts are provided by arginine 52 and threonine 53. Lysine 81 lines the L-aspartate pocket. Carbamoyl phosphate-binding residues include arginine 102, histidine 130, and glutamine 133. L-aspartate contacts are provided by arginine 163 and arginine 224. Carbamoyl phosphate is bound by residues leucine 264 and proline 265.

It belongs to the aspartate/ornithine carbamoyltransferase superfamily. ATCase family. In terms of assembly, heterododecamer (2C3:3R2) of six catalytic PyrB chains organized as two trimers (C3), and six regulatory PyrI chains organized as three dimers (R2).

The enzyme catalyses carbamoyl phosphate + L-aspartate = N-carbamoyl-L-aspartate + phosphate + H(+). It functions in the pathway pyrimidine metabolism; UMP biosynthesis via de novo pathway; (S)-dihydroorotate from bicarbonate: step 2/3. Functionally, catalyzes the condensation of carbamoyl phosphate and aspartate to form carbamoyl aspartate and inorganic phosphate, the committed step in the de novo pyrimidine nucleotide biosynthesis pathway. This Brachyspira hyodysenteriae (strain ATCC 49526 / WA1) protein is Aspartate carbamoyltransferase catalytic subunit.